The chain runs to 127 residues: Small ribosomal subunit protein eS8 (127 aa).

This sequence belongs to the eukaryotic ribosomal protein eS8 family. In terms of assembly, part of the 30S ribosomal subunit.

The sequence is that of Small ribosomal subunit protein eS8 from Nanoarchaeum equitans (strain Kin4-M).